Reading from the N-terminus, the 257-residue chain is Ig delta chain C region secreted form (257 aa).

The Ig-like 1 domain maps to Pro5–Thr105. A disulfide bridge links Cys26 with Cys78. N-linked (GlcNAc...) asparagine glycosylation is found at Asn58 and Asn75. Residues Pro89 to Lys111 form a disordered region. A compositionally biased stretch (polar residues) spans Trp96–Lys111. Residues Asn112, Asn135, and Asn227 are each glycosylated (N-linked (GlcNAc...) asparagine). The region spanning Pro133 to Ala233 is the Ig-like 2 domain.

Cell lines producing IgD contain several mRNA species for Ig delta chains. In plasmacytomas, the secreted form is the major component, and the membrane-bound form is a minor component. In spleen, however, the membrane-bound form is the major component. These two forms differ in their C-terminal segments.

Its subcellular location is the secreted. This chain is Ig delta chain C region secreted form, found in Mus musculus (Mouse).